The primary structure comprises 509 residues: Maturase K (509 aa).

This sequence belongs to the intron maturase 2 family. MatK subfamily.

Its subcellular location is the plastid. The protein localises to the chloroplast. Functionally, usually encoded in the trnK tRNA gene intron. Probably assists in splicing its own and other chloroplast group II introns. This chain is Maturase K, found in Jacaranda mimosifolia (Jacaranda).